Reading from the N-terminus, the 338-residue chain is Transcription factor AP-4 (338 aa).

The bHLH domain occupies 48 to 99 (IRREIANSNERRRMQSINAGFQSLKTLIPHTDGEKLSKAAILQQTAEYIFSL). A leucine-zipper 1 region spans residues 100–120 (EQEKTRLLQQNTQLKRFIQEL). Residues 118–141 (QELSGSSPKRRRAEDKDEGIGSPD) form a disordered region. 3 positions are modified to phosphoserine: serine 123, serine 124, and serine 139. Lysine 147 participates in a covalent cross-link: Glycyl lysine isopeptide (Lys-Gly) (interchain with G-Cter in SUMO2). The segment at 151–179 (LRREMIELRQQLDKERSVRMMLEEQVRSL) is leucine-zipper 2. Residues lysine 187, lysine 189, and lysine 285 each participate in a glycyl lysine isopeptide (Lys-Gly) (interchain with G-Cter in SUMO2) cross-link. The segment covering 283-294 (QEKQELEEEQRR) has biased composition (basic and acidic residues). A disordered region spans residues 283 to 338 (QEKQELEEEQRRAVIVKPVRSCPEAPTSDTASDSEASDSDAMDQSREEPSGDGELP).

In terms of assembly, efficient DNA binding requires dimerization with another bHLH protein. Homodimer.

The protein resides in the nucleus. In terms of biological role, transcription factor that activates both viral and cellular genes by binding to the symmetrical DNA sequence 5'-CAGCTG-3'. In Homo sapiens (Human), this protein is Transcription factor AP-4 (TFAP4).